Reading from the N-terminus, the 330-residue chain is Ferredoxin--NADP reductase (330 aa).

Glutamate 35, glutamine 43, tyrosine 48, valine 90, phenylalanine 123, aspartate 285, and threonine 326 together coordinate FAD.

The protein belongs to the ferredoxin--NADP reductase type 2 family. As to quaternary structure, homodimer. FAD is required as a cofactor.

It carries out the reaction 2 reduced [2Fe-2S]-[ferredoxin] + NADP(+) + H(+) = 2 oxidized [2Fe-2S]-[ferredoxin] + NADPH. The chain is Ferredoxin--NADP reductase from Streptococcus pyogenes serotype M3 (strain ATCC BAA-595 / MGAS315).